A 304-amino-acid chain; its full sequence is Agmatinase (304 aa).

Mn(2+) is bound by residues His126, Asp149, His151, Asp153, Asp230, and Asp232.

It belongs to the arginase family. Agmatinase subfamily. It depends on Mn(2+) as a cofactor.

The catalysed reaction is agmatine + H2O = urea + putrescine. The protein operates within amine and polyamine biosynthesis; putrescine biosynthesis via agmatine pathway; putrescine from agmatine: step 1/1. Catalyzes the formation of putrescine from agmatine. The sequence is that of Agmatinase from Edwardsiella ictaluri (strain 93-146).